Consider the following 360-residue polypeptide: Serine/threonine transporter SstT (360 aa).

The next 9 membrane-spanning stretches (helical) occupy residues 17–37 (IGIG…ITVI), 40–60 (FGSL…LTLV), 78–98 (VICL…GASY), 138–158 (ALAT…GLAF), 179–199 (VVGW…FDTI), 212–232 (LLLL…NPLI), 295–315 (MAGA…TLGI), 316–336 (SVDF…AAGA), and 339–359 (VAGG…VPYV).

The protein belongs to the dicarboxylate/amino acid:cation symporter (DAACS) (TC 2.A.23) family.

Its subcellular location is the cell membrane. The catalysed reaction is L-serine(in) + Na(+)(in) = L-serine(out) + Na(+)(out). It carries out the reaction L-threonine(in) + Na(+)(in) = L-threonine(out) + Na(+)(out). In terms of biological role, involved in the import of serine and threonine into the cell, with the concomitant import of sodium (symport system). This Streptococcus suis (strain 05ZYH33) protein is Serine/threonine transporter SstT.